A 570-amino-acid polypeptide reads, in one-letter code: Formate--tetrahydrofolate ligase (570 aa).

Position 65-72 (65-72) interacts with ATP; that stretch reads TPHGEGKT.

It belongs to the formate--tetrahydrofolate ligase family.

The enzyme catalyses (6S)-5,6,7,8-tetrahydrofolate + formate + ATP = (6R)-10-formyltetrahydrofolate + ADP + phosphate. It participates in one-carbon metabolism; tetrahydrofolate interconversion. This is Formate--tetrahydrofolate ligase from Shewanella sp. (strain ANA-3).